Here is a 146-residue protein sequence, read N- to C-terminus: Protein archease (146 aa).

Ca(2+)-binding residues include Asp-16, Asp-145, and Ile-146.

The protein belongs to the archease family.

Activates the tRNA-splicing ligase complex by facilitating the enzymatic turnover of catalytic subunit RtcB. Acts by promoting the guanylylation of RtcB, a key intermediate step in tRNA ligation. Can also alter the NTP specificity of RtcB such that ATP, dGTP or ITP is used efficiently. The polypeptide is Protein archease (Methanosarcina barkeri (strain Fusaro / DSM 804)).